A 185-amino-acid polypeptide reads, in one-letter code: Ribosome-recycling factor (185 aa).

It belongs to the RRF family.

The protein localises to the cytoplasm. Functionally, responsible for the release of ribosomes from messenger RNA at the termination of protein biosynthesis. May increase the efficiency of translation by recycling ribosomes from one round of translation to another. In Shewanella sp. (strain ANA-3), this protein is Ribosome-recycling factor.